The primary structure comprises 739 residues: DNA ligase (739 aa).

Residues 34–38 (DADYD), 83–84 (SL), and glutamate 117 each bind NAD(+). The N6-AMP-lysine intermediate role is filled by lysine 119. 4 residues coordinate NAD(+): arginine 140, glutamate 175, lysine 291, and lysine 315. Zn(2+)-binding residues include cysteine 420, cysteine 423, cysteine 438, and cysteine 444. The region spanning 660–739 (ADDSPVAGKT…DGWLDLIGQA (80 aa)) is the BRCT domain.

It belongs to the NAD-dependent DNA ligase family. LigA subfamily. Mg(2+) serves as cofactor. It depends on Mn(2+) as a cofactor.

It carries out the reaction NAD(+) + (deoxyribonucleotide)n-3'-hydroxyl + 5'-phospho-(deoxyribonucleotide)m = (deoxyribonucleotide)n+m + AMP + beta-nicotinamide D-nucleotide.. Its function is as follows. DNA ligase that catalyzes the formation of phosphodiester linkages between 5'-phosphoryl and 3'-hydroxyl groups in double-stranded DNA using NAD as a coenzyme and as the energy source for the reaction. It is essential for DNA replication and repair of damaged DNA. This is DNA ligase from Ruegeria sp. (strain TM1040) (Silicibacter sp.).